The sequence spans 434 residues: Methylenetetrahydrofolate--tRNA-(uracil-5-)-methyltransferase TrmFO (434 aa).

10-15 (GAGLAG) lines the FAD pocket.

It belongs to the MnmG family. TrmFO subfamily. The cofactor is FAD.

It localises to the cytoplasm. It carries out the reaction uridine(54) in tRNA + (6R)-5,10-methylene-5,6,7,8-tetrahydrofolate + NADH + H(+) = 5-methyluridine(54) in tRNA + (6S)-5,6,7,8-tetrahydrofolate + NAD(+). It catalyses the reaction uridine(54) in tRNA + (6R)-5,10-methylene-5,6,7,8-tetrahydrofolate + NADPH + H(+) = 5-methyluridine(54) in tRNA + (6S)-5,6,7,8-tetrahydrofolate + NADP(+). Catalyzes the folate-dependent formation of 5-methyl-uridine at position 54 (M-5-U54) in all tRNAs. The protein is Methylenetetrahydrofolate--tRNA-(uracil-5-)-methyltransferase TrmFO of Bacillus cereus (strain AH820).